The following is a 363-amino-acid chain: Protein U2 (363 aa).

The first 18 residues, 1–18, serve as a signal peptide directing secretion; it reads MFCRSPFLGISSWSLASA.

The protein is Protein U2 (U2) of Homo sapiens (Human).